Consider the following 745-residue polypeptide: Probable endochitinase ARB_07371 (745 aa).

The signal sequence occupies residues 1-23 (MALPKTIMAFIAFISFLVSTTFA). Residues 30–351 (TNVVTYWGQG…SNIKRLLLNN (322 aa)) enclose the GH18 domain. Glu178 serves as the catalytic Proton donor. Disordered stretches follow at residues 351-372 (NDPS…SMST) and 395-446 (WSMP…TTEI). A compositionally biased stretch (low complexity) spans 357 to 372 (TTTSKTMSSTKTSMST). Asn438 and Asn484 each carry an N-linked (GlcNAc...) asparagine glycan. The segment at 651–715 (SEPMTPTQVP…EMGGNGGDRT (65 aa)) is disordered. Gly720 carries GPI-anchor amidated glycine lipidation. Positions 721 to 745 (GAGVVSPSFSVVVIVLGSIVYHIMQ) are cleaved as a propeptide — removed in mature form.

It belongs to the glycosyl hydrolase 18 family. Chitinase class III subfamily.

Its subcellular location is the cell membrane. It is found in the secreted. The protein localises to the cell wall. The enzyme catalyses Random endo-hydrolysis of N-acetyl-beta-D-glucosaminide (1-&gt;4)-beta-linkages in chitin and chitodextrins.. GPI-anchored chitinase involved in the degradation of chitin, a component of the cell walls of fungi and exoskeletal elements of some animals (including worms and arthropods). Required to reshape the cell wall at the sites where cell wall remodeling and/or cell wall maturation actively take place such as sites of conidia formation. The chain is Probable endochitinase ARB_07371 from Arthroderma benhamiae (strain ATCC MYA-4681 / CBS 112371) (Trichophyton mentagrophytes).